The following is a 491-amino-acid chain: Argininosuccinate lyase (491 aa).

It belongs to the lyase 1 family. Argininosuccinate lyase subfamily.

The protein resides in the cytoplasm. The catalysed reaction is 2-(N(omega)-L-arginino)succinate = fumarate + L-arginine. It participates in amino-acid biosynthesis; L-arginine biosynthesis; L-arginine from L-ornithine and carbamoyl phosphate: step 3/3. The chain is Argininosuccinate lyase from Methanosarcina mazei (strain ATCC BAA-159 / DSM 3647 / Goe1 / Go1 / JCM 11833 / OCM 88) (Methanosarcina frisia).